A 140-amino-acid polypeptide reads, in one-letter code: Ergosterol biosynthetic protein 28 homolog (140 aa).

A run of 4 helical transmembrane segments spans residues 4 to 24 (FLNV…GNTL), 52 to 72 (TFGI…IDIH), 79 to 99 (ITLW…FVFG), and 105 to 125 (VGVL…LVGL).

It belongs to the ERG28 family.

It is found in the endoplasmic reticulum membrane. The protein is Ergosterol biosynthetic protein 28 homolog of Mus musculus (Mouse).